The primary structure comprises 61 residues: DNA-directed RNA polymerase subunit Rpo6 (61 aa).

Belongs to the archaeal Rpo6/eukaryotic RPB6 RNA polymerase subunit family. Part of the RNA polymerase complex.

The protein localises to the cytoplasm. It catalyses the reaction RNA(n) + a ribonucleoside 5'-triphosphate = RNA(n+1) + diphosphate. Functionally, DNA-dependent RNA polymerase (RNAP) catalyzes the transcription of DNA into RNA using the four ribonucleoside triphosphates as substrates. In Thermoplasma acidophilum (strain ATCC 25905 / DSM 1728 / JCM 9062 / NBRC 15155 / AMRC-C165), this protein is DNA-directed RNA polymerase subunit Rpo6.